We begin with the raw amino-acid sequence, 1150 residues long: PAN2-PAN3 deadenylation complex catalytic subunit pan2 (1150 aa).

2 WD repeats span residues 96–139 (AHEE…DKLH) and 270–309 (ANVS…HFNE). The segment at 310 to 446 (MSKEAEFGDV…GAKINGETDD (137 aa)) is linker. Positions 447-816 (DPLLKYSNVE…IPCVLAYQVQ (370 aa)) constitute a USP domain. In terms of domain architecture, Exonuclease spans 865–1043 (VALDTEFVDL…IEDARMALRL (179 aa)). A divalent metal cation contacts are provided by D868, E870, D977, and D1036. Residues 1074 to 1150 (PPPRNGVPTV…GDFFSGSPLK (77 aa)) are disordered. The span at 1091–1106 (VTMQNNSGRNTPSTSD) shows a compositional bias: polar residues. Low complexity predominate over residues 1108-1120 (AGAAASAPATPRQ).

Belongs to the peptidase C19 family. PAN2 subfamily. Forms a heterotrimer with an asymmetric homodimer of the regulatory subunit pan3 to form the poly(A)-nuclease (PAN) deadenylation complex. Requires a divalent metal cation as cofactor.

It localises to the cytoplasm. It catalyses the reaction Exonucleolytic cleavage of poly(A) to 5'-AMP.. With respect to regulation, positively regulated by the regulatory subunit pan3. Catalytic subunit of the poly(A)-nuclease (PAN) deadenylation complex, one of two cytoplasmic mRNA deadenylases involved in mRNA turnover. PAN specifically shortens poly(A) tails of RNA and the activity is stimulated by poly(A)-binding protein pab1. PAN deadenylation is followed by rapid degradation of the shortened mRNA tails by the CCR4-NOT complex. Deadenylated mRNAs are then degraded by two alternative mechanisms, namely exosome-mediated 3'-5' exonucleolytic degradation, or deadenylation-dependent mRNA decaping and subsequent 5'-3' exonucleolytic degradation by xrn1. May also be involved in post-transcriptional maturation of mRNA poly(A) tails. This chain is PAN2-PAN3 deadenylation complex catalytic subunit pan2, found in Aspergillus niger (strain ATCC MYA-4892 / CBS 513.88 / FGSC A1513).